The sequence spans 653 residues: Brain-enriched guanylate kinase-associated protein (653 aa).

A Phosphotyrosine modification is found at Y186. The disordered stretch occupies residues 241–271; that stretch reads PGSLSSHLSEASAQDLGFPEGLEKPGSRPPY. Polar residues predominate over residues 243 to 252; it reads SLSSHLSEAS. Residues S249, S278, S295, and S314 each carry the phosphoserine modification. Residues 288 to 329 are disordered; that stretch reads RHQDRRPSVEGPGSDVGFLQAQNSTDSTAEEEEEEEEDTEAG. Over residues 315-327 the composition is skewed to acidic residues; sequence TAEEEEEEEEDTE. A phosphoserine mark is found at S400 and S427. An Asymmetric dimethylarginine modification is found at R435. Residues S523, S533, S535, S558, S560, S564, S613, and S623 each carry the phosphoserine modification. The tract at residues 587 to 653 is disordered; sequence GASGSPEPEL…KAQLYGTLLN (67 aa).

As to quaternary structure, interacts with DLG4 and DLGAP1 and forms a ternary complex.

Its subcellular location is the cytoplasm. It localises to the membrane. May sustain the structure of the postsynaptic density (PSD). The chain is Brain-enriched guanylate kinase-associated protein (BEGAIN) from Ovis aries (Sheep).